We begin with the raw amino-acid sequence, 415 residues long: 2-oxoadipate dioxygenase/decarboxylase (415 aa).

2-oxoadipate contacts are provided by histidine 66, arginine 70, and histidine 225. Histidine 66 is a binding site for Fe(2+). Residues histidine 225 and glutamate 296 each contribute to the Fe(2+) site. Alanine 361 contributes to the 2-oxoadipate binding site.

Belongs to the 2-oxoadipate dioxygenase/decarboxylase family. The cofactor is Fe(2+).

The enzyme catalyses 2-oxoadipate + O2 = (R)-2-hydroxyglutarate + CO2. In terms of biological role, catalyzes the decarboxylation and hydroxylation of 2-oxoadipate (2OA) to form D-2-hydroxyglutarate (D-2-HGA). In Mycobacterium bovis (strain ATCC BAA-935 / AF2122/97), this protein is 2-oxoadipate dioxygenase/decarboxylase.